Reading from the N-terminus, the 186-residue chain is ATP synthase subunit delta (186 aa).

Belongs to the ATPase delta chain family. In terms of assembly, F-type ATPases have 2 components, F(1) - the catalytic core - and F(0) - the membrane proton channel. F(1) has five subunits: alpha(3), beta(3), gamma(1), delta(1), epsilon(1). F(0) has three main subunits: a(1), b(2) and c(10-14). The alpha and beta chains form an alternating ring which encloses part of the gamma chain. F(1) is attached to F(0) by a central stalk formed by the gamma and epsilon chains, while a peripheral stalk is formed by the delta and b chains.

The protein localises to the cell inner membrane. Its function is as follows. F(1)F(0) ATP synthase produces ATP from ADP in the presence of a proton or sodium gradient. F-type ATPases consist of two structural domains, F(1) containing the extramembraneous catalytic core and F(0) containing the membrane proton channel, linked together by a central stalk and a peripheral stalk. During catalysis, ATP synthesis in the catalytic domain of F(1) is coupled via a rotary mechanism of the central stalk subunits to proton translocation. In terms of biological role, this protein is part of the stalk that links CF(0) to CF(1). It either transmits conformational changes from CF(0) to CF(1) or is implicated in proton conduction. The polypeptide is ATP synthase subunit delta (Bacteroides fragilis (strain ATCC 25285 / DSM 2151 / CCUG 4856 / JCM 11019 / LMG 10263 / NCTC 9343 / Onslow / VPI 2553 / EN-2)).